The primary structure comprises 329 residues: GTP 3',8-cyclase (329 aa).

Positions A8–A234 constitute a Radical SAM core domain. R17 provides a ligand contact to GTP. The [4Fe-4S] cluster site is built by C24 and C28. Residue Y30 participates in S-adenosyl-L-methionine binding. C31 provides a ligand contact to [4Fe-4S] cluster. R68 provides a ligand contact to GTP. S-adenosyl-L-methionine is bound at residue G72. Residue T99 participates in GTP binding. An S-adenosyl-L-methionine-binding site is contributed by S123. Residue K160 coordinates GTP. M194 lines the S-adenosyl-L-methionine pocket. [4Fe-4S] cluster-binding residues include C257 and C260. Residue R262–R264 coordinates GTP. C274 is a binding site for [4Fe-4S] cluster.

This sequence belongs to the radical SAM superfamily. MoaA family. As to quaternary structure, monomer and homodimer. Requires [4Fe-4S] cluster as cofactor.

It carries out the reaction GTP + AH2 + S-adenosyl-L-methionine = (8S)-3',8-cyclo-7,8-dihydroguanosine 5'-triphosphate + 5'-deoxyadenosine + L-methionine + A + H(+). It functions in the pathway cofactor biosynthesis; molybdopterin biosynthesis. Functionally, catalyzes the cyclization of GTP to (8S)-3',8-cyclo-7,8-dihydroguanosine 5'-triphosphate. The chain is GTP 3',8-cyclase from Salmonella heidelberg (strain SL476).